Reading from the N-terminus, the 498-residue chain is Pentatricopeptide repeat-containing protein At3g61360 (498 aa).

PPR repeat units lie at residues 102–132 (TSDS…VRKD), 138–172 (SFKS…IFRK), 175–205 (GVDE…LHSR), 209–243 (DVKT…GFKP), 244–278 (NSVT…DFDI), 279–313 (TVQI…GLTP), 314–348 (DCGA…GIEP), 349–385 (DSVT…SLVP), and 386–420 (KTPT…GYCP).

It belongs to the PPR family. P subfamily.

This Arabidopsis thaliana (Mouse-ear cress) protein is Pentatricopeptide repeat-containing protein At3g61360.